A 305-amino-acid chain; its full sequence is Phospho-N-acetylmuramoyl-pentapeptide-transferase (305 aa).

Transmembrane regions (helical) follow at residues 1–21 (MLMVAALLSWFLVGLFIRASK), 46–66 (AGGVAFVLAMALVFFPLYLSG), 73–93 (ELLIMLTALAMGVVGGVDDWL), 113–133 (FPLQFLVALVFAWLAAPLASH), 139–159 (LGPVMDVVLIALVMVGSVNAF), 174–194 (IIVLLPLLALSPVSALLVAVL), 207–227 (VFMGDMGSHAIGAVAAGAYIL), 233–253 (LLPIAAIIPVVAVLSVMIQVI), and 282–302 (VTIRFWVITAVATAAVWWLLG).

It belongs to the glycosyltransferase 4 family. MraY subfamily. Mg(2+) is required as a cofactor.

The protein localises to the cell membrane. It catalyses the reaction UDP-N-acetyl-alpha-D-muramoyl-L-alanyl-gamma-D-glutamyl-meso-2,6-diaminopimeloyl-D-alanyl-D-alanine + di-trans,octa-cis-undecaprenyl phosphate = di-trans,octa-cis-undecaprenyl diphospho-N-acetyl-alpha-D-muramoyl-L-alanyl-D-glutamyl-meso-2,6-diaminopimeloyl-D-alanyl-D-alanine + UMP. Its pathway is cell wall biogenesis; peptidoglycan biosynthesis. Functionally, catalyzes the initial step of the lipid cycle reactions in the biosynthesis of the cell wall peptidoglycan: transfers peptidoglycan precursor phospho-MurNAc-pentapeptide from UDP-MurNAc-pentapeptide onto the lipid carrier undecaprenyl phosphate, yielding undecaprenyl-pyrophosphoryl-MurNAc-pentapeptide, known as lipid I. This Deinococcus deserti (strain DSM 17065 / CIP 109153 / LMG 22923 / VCD115) protein is Phospho-N-acetylmuramoyl-pentapeptide-transferase.